The following is a 428-amino-acid chain: Serine--tRNA ligase (428 aa).

235-237 (TAE) provides a ligand contact to L-serine. 266–268 (RSE) is an ATP binding site. Glu-289 lines the L-serine pocket. Residue 353-356 (EISS) participates in ATP binding. Ser-389 is an L-serine binding site.

This sequence belongs to the class-II aminoacyl-tRNA synthetase family. Type-1 seryl-tRNA synthetase subfamily. As to quaternary structure, homodimer. The tRNA molecule binds across the dimer.

It is found in the cytoplasm. It carries out the reaction tRNA(Ser) + L-serine + ATP = L-seryl-tRNA(Ser) + AMP + diphosphate + H(+). It catalyses the reaction tRNA(Sec) + L-serine + ATP = L-seryl-tRNA(Sec) + AMP + diphosphate + H(+). It participates in aminoacyl-tRNA biosynthesis; selenocysteinyl-tRNA(Sec) biosynthesis; L-seryl-tRNA(Sec) from L-serine and tRNA(Sec): step 1/1. Functionally, catalyzes the attachment of serine to tRNA(Ser). Is also able to aminoacylate tRNA(Sec) with serine, to form the misacylated tRNA L-seryl-tRNA(Sec), which will be further converted into selenocysteinyl-tRNA(Sec). This is Serine--tRNA ligase from Shewanella amazonensis (strain ATCC BAA-1098 / SB2B).